Reading from the N-terminus, the 228-residue chain is Deoxyguanosine kinase (228 aa).

8–16 (GPIGAGKSS) serves as a coordination point for ATP. Substrate contacts are provided by Glu-32, Tyr-44, and Gln-55. Asp-78 acts as the Proton acceptor in catalysis. Substrate-binding residues include Arg-79, Asp-84, and Glu-149.

The protein belongs to the DCK/DGK family. Heterodimer of a deoxyadenosine (DAK) and a deoxyguanosine kinase (DGK).

It carries out the reaction 2'-deoxyguanosine + ATP = dGMP + ADP + H(+). In terms of biological role, DGK/DAK plays an essential role in generating the deoxyribonucleotide precursors, dGTP and dATP, for DNA metabolism. This chain is Deoxyguanosine kinase, found in Lactobacillus acidophilus (strain ATCC 700396 / NCK56 / N2 / NCFM).